We begin with the raw amino-acid sequence, 34 residues long: Protein MgtT (34 aa).

The disordered stretch occupies residues 1–34 (MNGDNPSPNRPLVTVVYKGPDFYDGEKKPPVNRR). Residues 24–34 (DGEKKPPVNRR) show a composition bias toward basic and acidic residues.

This is Protein MgtT from Escherichia coli (strain K12).